The sequence spans 179 residues: Bifunctional protein PyrR (179 aa).

A PRPP-binding motif is present at residues 100 to 112 (VILIDDVLFTGRT).

It belongs to the purine/pyrimidine phosphoribosyltransferase family. PyrR subfamily.

It carries out the reaction UMP + diphosphate = 5-phospho-alpha-D-ribose 1-diphosphate + uracil. Regulates the transcription of the pyrimidine nucleotide (pyr) operon in response to exogenous pyrimidines. Functionally, also displays a weak uracil phosphoribosyltransferase activity which is not physiologically significant. This Mannheimia succiniciproducens (strain KCTC 0769BP / MBEL55E) protein is Bifunctional protein PyrR.